The chain runs to 597 residues: Histidine protein kinase DivJ (597 aa).

A run of 6 helical transmembrane segments spans residues 40 to 57 (LGWL…LFTA), 62 to 81 (WPVW…SLIF), 91 to 109 (WLLV…LTGG), 110 to 125 (VGGA…VAAA), 137 to 158 (GAAL…GLAP), and 159 to 188 (AAPT…LLIG). Residues 335–553 (NMSHELRTPL…TVSVRLPVLL (219 aa)) form the Histidine kinase domain. Position 338 is a phosphohistidine; by autocatalysis (H338). Positions 561-585 (PTPPAAPEAPSAPEPAPTVEEPPPA) are enriched in pro residues. Residues 561–597 (PTPPAAPEAPSAPEPAPTVEEPPPASLGDNVIAFAPR) form a disordered region.

The protein localises to the cell membrane. It carries out the reaction ATP + protein L-histidine = ADP + protein N-phospho-L-histidine.. In terms of biological role, kinase required for the regulation of cell division and differentiation. Is part of a signal transduction pathway, activating PleD by phosphorylation. The sequence is that of Histidine protein kinase DivJ (divJ) from Caulobacter vibrioides (strain ATCC 19089 / CIP 103742 / CB 15) (Caulobacter crescentus).